Consider the following 160-residue polypeptide: Cytochrome b6-f complex subunit 4 (160 aa).

The next 3 membrane-spanning stretches (helical) occupy residues 36–56 (ILYM…GLSI), 95–115 (LVGV…PFIE), and 127–147 (PIAT…GIGA).

It belongs to the cytochrome b family. PetD subfamily. The 4 large subunits of the cytochrome b6-f complex are cytochrome b6, subunit IV (17 kDa polypeptide, petD), cytochrome f and the Rieske protein, while the 4 small subunits are petG, petL, petM and petN. The complex functions as a dimer.

Its subcellular location is the plastid. It localises to the chloroplast thylakoid membrane. Component of the cytochrome b6-f complex, which mediates electron transfer between photosystem II (PSII) and photosystem I (PSI), cyclic electron flow around PSI, and state transitions. In Gracilaria tenuistipitata var. liui (Red alga), this protein is Cytochrome b6-f complex subunit 4.